The chain runs to 21 residues: AILELPQSPNVFHPEKPSAVG.

A disordered region spans residues 1 to 21 (AILELPQSPNVFHPEKPSAVG).

It is found in the cytoplasm. In terms of biological role, component of the cytoplasmic filaments that run the length of the organism just underneath the cytoplasmic membrane. In Treponema phagedenis, this protein is Cytoplasmic filament protein A (cfpA).